We begin with the raw amino-acid sequence, 589 residues long: Muscarinic acetylcholine receptor M3 (589 aa).

The Extracellular segment spans residues 1–66 (MTLHSNSTTS…DPLGGHTIWQ (66 aa)). Asparagine 6, asparagine 15, asparagine 41, asparagine 48, and asparagine 52 each carry an N-linked (GlcNAc...) asparagine glycan. A helical transmembrane segment spans residues 67 to 90 (VVFIAFLTGFLALVTIIGNILVIV). Over 91 to 103 (AFKVNKQLKTVNN) the chain is Cytoplasmic. A helical transmembrane segment spans residues 104-129 (YFLLSLACADLIIGVISMNLFTTYII). The Extracellular segment spans residues 130–141 (MNRWALGNLACD). Cysteine 140 and cysteine 220 are oxidised to a cystine. Residues 142-163 (LWLSIDYVASNASVMNLLVISF) form a helical membrane-spanning segment. Over 164–183 (DRYFSITRPLTYRAKRTTKR) the chain is Cytoplasmic. A helical membrane pass occupies residues 184-205 (AGVMIGLAWVISFVLWAPAILF). The Extracellular portion of the chain corresponds to 206–228 (WQYFVGKRTVPPGECFIQFLSEP). Residues 229–251 (TITFGTAIAAFYMPVTIMTILYW) form a helical membrane-spanning segment. The Cytoplasmic segment spans residues 252–490 (RIYKETEKRT…SLIKEKKAAQ (239 aa)). The short motif at 274 to 280 (AEAENFV) is the Basolateral sorting signal element. The tract at residues 323–356 (AEQMDQDHSSSDSWNNNDAAASLENSASSDEEDI) is disordered. Low complexity predominate over residues 333 to 344 (SDSWNNNDAAAS). The residue at position 384 (serine 384) is a Phosphoserine. Residues 491–513 (TLSAILLAFIITWTPYNIMVLVN) form a helical membrane-spanning segment. At 514-525 (TFCDSCIPKTYW) the chain is on the extracellular side. The cysteines at positions 516 and 519 are disulfide-linked. A helical membrane pass occupies residues 526 to 545 (NLGYWLCYINSTVNPVCYAL). The Cytoplasmic portion of the chain corresponds to 546–589 (CNKTFRTTFKTLLLCQCDKRKRRKQQYQQRQSVIFHKRVPEQAL).

The protein belongs to the G-protein coupled receptor 1 family. Muscarinic acetylcholine receptor subfamily. CHRM3 sub-subfamily. Homodimer; the dimers can form tetramers. Interacts with NALCN. Interacts with TMEM147.

The protein localises to the cell membrane. The protein resides in the postsynaptic cell membrane. It localises to the basolateral cell membrane. Its subcellular location is the endoplasmic reticulum membrane. Functionally, the muscarinic acetylcholine receptor mediates various cellular responses, including inhibition of adenylate cyclase, breakdown of phosphoinositides and modulation of potassium channels through the action of G proteins. Primary transducing effect is Pi turnover. The polypeptide is Muscarinic acetylcholine receptor M3 (Chrm3) (Rattus norvegicus (Rat)).